The primary structure comprises 182 residues: MRLNIPTCLTLFRLIIVPFFIIVFYLPFSNASFYSAIIFILAALTDWFDGFLARKLNQTTCFGAFLDPVADKIIVVIGLILIIEYFHSFWITIPSLIMIIREIIISSLREWMAEIGKNNLLSVSLISKLKTSIQMLAIFSLLWKETYIIIIIGILSLYVSSILAFLSMLKYFYIAWRDLFRN.

The Cytoplasmic segment spans residues 1 to 12 (MRLNIPTCLTLF). A helical transmembrane segment spans residues 13–37 (RLIIVPFFIIVFYLPFSNASFYSAI). Over 38–60 (IFILAALTDWFDGFLARKLNQTT) the chain is Periplasmic. The chain crosses the membrane as a helical span at residues 61 to 81 (CFGAFLDPVADKIIVVIGLIL). Topologically, residues 82 to 86 (IIEYF) are cytoplasmic. A helical transmembrane segment spans residues 87–107 (HSFWITIPSLIMIIREIIISS). Topologically, residues 108 to 145 (LREWMAEIGKNNLLSVSLISKLKTSIQMLAIFSLLWKE) are periplasmic. The chain crosses the membrane as a helical span at residues 146–168 (TYIIIIIGILSLYVSSILAFLSM). Topologically, residues 169–181 (LKYFYIAWRDLFR) are cytoplasmic.

Belongs to the CDP-alcohol phosphatidyltransferase class-I family.

The protein localises to the cell inner membrane. It carries out the reaction a CDP-1,2-diacyl-sn-glycerol + sn-glycerol 3-phosphate = a 1,2-diacyl-sn-glycero-3-phospho-(1'-sn-glycero-3'-phosphate) + CMP + H(+). The protein operates within phospholipid metabolism; phosphatidylglycerol biosynthesis; phosphatidylglycerol from CDP-diacylglycerol: step 1/2. Its function is as follows. Catalyzes the conversion of cytidine diphosphate diacylglycerol (CDP-DG) and glycerol 3-phosphate into phosphatidylglycerol. Essential for the synthesis of anionic phospholipids, thereby playing a role in balancing the ratio of zwitterionic and anionic phospholipids, which is thought to be important for normal membrane function. This Wigglesworthia glossinidia brevipalpis protein is CDP-diacylglycerol--glycerol-3-phosphate 3-phosphatidyltransferase.